Here is a 292-residue protein sequence, read N- to C-terminus: Mycothiol acetyltransferase (292 aa).

2 consecutive N-acetyltransferase domains span residues 2–138 (AEVV…PSAP) and 141–292 (VTVR…YAHS). A 1D-myo-inositol 2-(L-cysteinylamino)-2-deoxy-alpha-D-glucopyranoside-binding site is contributed by Glu-33. 68–70 (AVV) serves as a coordination point for acetyl-CoA. 3 residues coordinate 1D-myo-inositol 2-(L-cysteinylamino)-2-deoxy-alpha-D-glucopyranoside: Glu-168, Lys-215, and Glu-225. Residues 229–231 (VAV) and 236–242 (QGRGLGR) contribute to the acetyl-CoA site. Tyr-263 is a 1D-myo-inositol 2-(L-cysteinylamino)-2-deoxy-alpha-D-glucopyranoside binding site. Residue 268 to 273 (NAAALH) coordinates acetyl-CoA.

It belongs to the acetyltransferase family. MshD subfamily. In terms of assembly, monomer.

It carries out the reaction 1D-myo-inositol 2-(L-cysteinylamino)-2-deoxy-alpha-D-glucopyranoside + acetyl-CoA = mycothiol + CoA + H(+). Catalyzes the transfer of acetyl from acetyl-CoA to desacetylmycothiol (Cys-GlcN-Ins) to form mycothiol. This Tsukamurella paurometabola (strain ATCC 8368 / DSM 20162 / CCUG 35730 / CIP 100753 / JCM 10117 / KCTC 9821 / NBRC 16120 / NCIMB 702349 / NCTC 13040) (Corynebacterium paurometabolum) protein is Mycothiol acetyltransferase.